Reading from the N-terminus, the 485-residue chain is Adenosylhomocysteinase (485 aa).

Substrate is bound by residues threonine 60, aspartate 146, and glutamate 208. An NAD(+)-binding site is contributed by 209-211 (TTT). Residues lysine 238 and aspartate 242 each contribute to the substrate site. NAD(+)-binding positions include asparagine 243, 272–277 (GYGDVG), glutamate 295, asparagine 330, 351–353 (IGH), and asparagine 399.

Belongs to the adenosylhomocysteinase family. The cofactor is NAD(+).

It is found in the cytoplasm. It catalyses the reaction S-adenosyl-L-homocysteine + H2O = L-homocysteine + adenosine. It functions in the pathway amino-acid biosynthesis; L-homocysteine biosynthesis; L-homocysteine from S-adenosyl-L-homocysteine: step 1/1. May play a key role in the regulation of the intracellular concentration of adenosylhomocysteine. This chain is Adenosylhomocysteinase, found in Streptomyces avermitilis (strain ATCC 31267 / DSM 46492 / JCM 5070 / NBRC 14893 / NCIMB 12804 / NRRL 8165 / MA-4680).